The sequence spans 130 residues: Small ribosomal subunit protein uS9 (130 aa).

This sequence belongs to the universal ribosomal protein uS9 family.

In Haemophilus influenzae (strain 86-028NP), this protein is Small ribosomal subunit protein uS9.